The primary structure comprises 273 residues: Glucosamine-6-phosphate deaminase (273 aa).

The Proton acceptor; for enolization step role is filled by aspartate 72. Aspartate 141 functions as the For ring-opening step in the catalytic mechanism. The active-site Proton acceptor; for ring-opening step is the histidine 143. Residue glutamate 148 is the For ring-opening step of the active site.

This sequence belongs to the glucosamine/galactosamine-6-phosphate isomerase family. As to quaternary structure, homohexamer.

It localises to the cytoplasm. The catalysed reaction is alpha-D-glucosamine 6-phosphate + H2O = beta-D-fructose 6-phosphate + NH4(+). It functions in the pathway nucleotide-sugar biosynthesis; UDP-N-acetyl-alpha-D-glucosamine biosynthesis; alpha-D-glucosamine 6-phosphate from D-fructose 6-phosphate: step 1/1. Functionally, catalyzes the reversible conversion of alpha-D-glucosamine 6-phosphate (GlcN-6P) into beta-D-fructose 6-phosphate (Fru-6P) and ammonium ion, a regulatory reaction step in de novo uridine diphosphate-N-acetyl-alpha-D-glucosamine (UDP-GlcNAc) biosynthesis via hexosamine pathway. In Anopheles gambiae (African malaria mosquito), this protein is Glucosamine-6-phosphate deaminase (Gnpda1).